A 228-amino-acid chain; its full sequence is Fluoride-specific ion channel FluC (228 aa).

The next 7 helical transmembrane spans lie at 3 to 23 (LSLF…FWVS), 37 to 57 (GTLF…VMMI), 72 to 92 (VGFL…LALF), 101 to 121 (ALNV…GAVL), 141 to 161 (IFGA…LAFA), 172 to 192 (LVLV…LVVT), and 202 to 222 (LWGA…LGLV). Na(+)-binding residues include glycine 76 and threonine 79.

Belongs to the fluoride channel Fluc/FEX (TC 1.A.43) family.

The protein resides in the cell inner membrane. It carries out the reaction fluoride(in) = fluoride(out). Na(+) is not transported, but it plays an essential structural role and its presence is essential for fluoride channel function. In terms of biological role, fluoride-specific ion channel. Important for reducing fluoride concentration in the cell, thus reducing its toxicity. This chain is Fluoride-specific ion channel FluC, found in Methylococcus capsulatus (strain ATCC 33009 / NCIMB 11132 / Bath).